A 323-amino-acid chain; its full sequence is Lipid A biosynthesis myristoyltransferase (323 aa).

A helical transmembrane segment spans residues 23-43 (YWGAWLGVAAMAGIALTPPKF). Residues 139–144 (HGWAVD) carry the HXXXXD motif motif.

This sequence belongs to the LpxL/LpxM/LpxP family. LpxM subfamily.

The protein resides in the cell inner membrane. The catalysed reaction is alpha-Kdo-(2-&gt;4)-alpha-Kdo-(2-&gt;6)-(dodecanoyl)-lipid IVA (E. coli) + tetradecanoyl-[ACP] = alpha-Kdo-(2-&gt;4)-alpha-Kdo-(2-&gt;6)-lipid A (E. coli) + holo-[ACP]. It carries out the reaction (9Z)-hexadecenoyl-(Kdo)2-lipid IVA (E. coli) + tetradecanoyl-[ACP] = ((9Z)-hexadecenoyl-tetradecanoyl)-(Kdo)2-lipid A + holo-[ACP]. It participates in glycolipid biosynthesis; KDO(2)-lipid A biosynthesis; KDO(2)-lipid A from CMP-3-deoxy-D-manno-octulosonate and lipid IV(A): step 4/4. Its pathway is bacterial outer membrane biogenesis; lipopolysaccharide biosynthesis. Functionally, catalyzes the transfer of myristate from myristoyl-[acyl-carrier-protein] (ACP) to Kdo(2)-(lauroyl)-lipid IV(A) to form Kdo(2)-lipid A. Can probably also catalyze the transfer of myristate to Kdo(2)-(palmitoleoyl)-lipid IV(A) to form the cold-adapted Kdo(2)-lipid A. In vitro, can acylate Kdo(2)-lipid IV(A), but acylation of (KDO)2-(lauroyl)-lipid IV(A) is about 100 times faster. In vitro, can use lauroyl-ACP but displays a slight kinetic preference for myristoyl-ACP. This Escherichia coli (strain K12) protein is Lipid A biosynthesis myristoyltransferase.